The following is a 497-amino-acid chain: 4,4'-diaponeurosporene oxygenase (497 aa).

Position 7 to 19 (7 to 19 (VIGGGLGGISAAI)) interacts with FAD.

It belongs to the carotenoid/retinoid oxidoreductase family. CrtP subfamily. Requires FAD as cofactor.

It catalyses the reaction all-trans-4,4'-diaponeurosporene + 2 AH2 + 2 O2 = 4,4'-diaponeurosporenal + 2 A + 3 H2O. The protein operates within carotenoid biosynthesis; staphyloxanthin biosynthesis; staphyloxanthin from farnesyl diphosphate: step 3/5. Its function is as follows. Involved in the biosynthesis of the yellow-orange carotenoid staphyloxanthin, which plays a role in the virulence via its protective function against oxidative stress. Catalyzes the oxidation of the terminal methyl side group of 4,4'-diaponeurosporene to form 4,4'-diaponeurosporen-4-al. The protein is 4,4'-diaponeurosporene oxygenase of Staphylococcus aureus (strain MRSA252).